Consider the following 395-residue polypeptide: Univin (395 aa).

The signal sequence occupies residues Met-1–Ser-19. Positions Ala-20–Arg-272 are excised as a propeptide. N-linked (GlcNAc...) asparagine glycosylation occurs at Asn-50. Residues Glu-69–Leu-97 are disordered. N-linked (GlcNAc...) asparagine glycans are attached at residues Asn-116 and Asn-336. 3 cysteine pairs are disulfide-bonded: Cys-294–Cys-360, Cys-323–Cys-392, and Cys-327–Cys-394.

It belongs to the TGF-beta family. Homodimer; disulfide-linked.

Its subcellular location is the secreted. Could have a critical role in early developmental decisions in the sea urchin embryo. This is Univin from Strongylocentrotus purpuratus (Purple sea urchin).